A 1237-amino-acid chain; its full sequence is ATP-dependent RNA helicase DEAH13 (1237 aa).

2 disordered regions span residues 1 to 51 (MASV…NSNV) and 115 to 148 (AMQLSKAGVETEHSDESVEQNDNDDDSCMDEPTT). A compositionally biased stretch (polar residues) spans 24-38 (SNKMQDKLNSNNNTG). The segment covering 131–143 (SVEQNDNDDDSCM) has biased composition (acidic residues). Residues 251–443 (MEAINRHPAV…KRLFPNIPPL (193 aa)) enclose the Helicase ATP-binding domain. 264 to 271 (GQTGCGKT) is a binding site for ATP. Residues 367–370 (DEAH) carry the DEAH box motif. Positions 543–585 (DDDSNNQNSRFSSHGEDPSDIGDGNYDDDFEEEDMYESDEDRD) are disordered. Positions 567–585 (NYDDDFEEEDMYESDEDRD) are enriched in acidic residues. The Helicase C-terminal domain maps to 605 to 776 (ALRAAFNALA…GVILLMKSMN (172 aa)). The tract at residues 876 to 910 (EKKNESKDADKTVKQEDKQRKKDRKEKIKAARDRF) is disordered.

The protein belongs to the DEAD box helicase family. DEAH subfamily.

It catalyses the reaction ATP + H2O = ADP + phosphate + H(+). The chain is ATP-dependent RNA helicase DEAH13 from Arabidopsis thaliana (Mouse-ear cress).